The primary structure comprises 99 residues: Cysteine-rich C-terminal protein 1 (99 aa).

Disordered regions lie at residues 1–42 (MSSQ…CCGS) and 65–99 (RRRR…CSGC). Residues 22–32 (APCPAPAPTPA) are compositionally biased toward pro residues. The segment covering 83-99 (QRSQRSNNRSSGCCSGC) has biased composition (low complexity).

This Homo sapiens (Human) protein is Cysteine-rich C-terminal protein 1 (CRCT1).